The sequence spans 88 residues: UPF0223 protein YktA (88 aa).

This sequence belongs to the UPF0223 family.

The sequence is that of UPF0223 protein YktA (yktA) from Bacillus subtilis (strain 168).